We begin with the raw amino-acid sequence, 268 residues long: MAFSTIFILLICGICTNMVSAIFGIGGGVLMVPILRTLFPELPIQVISATSLTIVMCTALINLLFFHKQKIKIDYINMILWSIAMVIGVQIGFELSFYFSTAIISLIFTVSLSALAIKTFLNRSRIQIEVFNMSPIERAKGSISFCGGGLIAGITGIGGGSILAPLVGQLKGVKTQQIAVYTNYMMIIGGIGNLYGYLTRAFLYDASLSGQLGLNFLVVGVVTLGSFEMSFFSMKLRGLMNPVLTRKLLAIILFCIAAYMCILEFVFH.

8 helical membrane passes run 6 to 26, 46 to 66, 79 to 99, 101 to 121, 147 to 167, 178 to 198, 212 to 232, and 248 to 268; these read IFILLICGICTNMVSAIFGIG, VISATSLTIVMCTALINLLFF, ILWSIAMVIGVQIGFELSFYF, TAIISLIFTVSLSALAIKTFL, GGGLIAGITGIGGGSILAPLV, IAVYTNYMMIIGGIGNLYGYL, LGLNFLVVGVVTLGSFEMSFF, and LLAIILFCIAAYMCILEFVFH.

Belongs to the 4-toluene sulfonate uptake permease (TSUP) (TC 2.A.102) family.

It localises to the cell membrane. This Haemophilus influenzae (strain ATCC 51907 / DSM 11121 / KW20 / Rd) protein is Probable membrane transporter protein HI_0806.